We begin with the raw amino-acid sequence, 359 residues long: WD repeat-containing protein 89 homolog (359 aa).

WD repeat units follow at residues 23–62, 65–104, 106–144, 146–186, 192–232, and 294–333; these read IGDD…ILNV, GHKD…CSQT, NQQG…RKFD, SHTE…DDDA, NAED…KIKH, and VHTD…TNIL.

This is WD repeat-containing protein 89 homolog (wdr89) from Dictyostelium discoideum (Social amoeba).